The sequence spans 415 residues: Gamma-glutamyl phosphate reductase (415 aa).

It belongs to the gamma-glutamyl phosphate reductase family.

Its subcellular location is the cytoplasm. It catalyses the reaction L-glutamate 5-semialdehyde + phosphate + NADP(+) = L-glutamyl 5-phosphate + NADPH + H(+). The protein operates within amino-acid biosynthesis; L-proline biosynthesis; L-glutamate 5-semialdehyde from L-glutamate: step 2/2. Functionally, catalyzes the NADPH-dependent reduction of L-glutamate 5-phosphate into L-glutamate 5-semialdehyde and phosphate. The product spontaneously undergoes cyclization to form 1-pyrroline-5-carboxylate. This Listeria monocytogenes serotype 4a (strain HCC23) protein is Gamma-glutamyl phosphate reductase.